A 330-amino-acid chain; its full sequence is Putative [LysW]-L-2-aminoadipate/[LysW]-L-glutamate phosphate reductase (330 aa).

10–13 (SGYI) provides a ligand contact to NADP(+). Cysteine 142 is a catalytic residue. An NADP(+)-binding site is contributed by asparagine 297.

Belongs to the NAGSA dehydrogenase family. Type 1 subfamily. LysY sub-subfamily.

The protein localises to the cytoplasm. The catalysed reaction is [amino-group carrier protein]-C-terminal-N-(1-carboxy-5-oxopentan-1-yl)-L-glutamine + phosphate + NADP(+) = [amino-group carrier protein]-C-terminal-N-(1-carboxy-5-phosphooxy-5-oxopentan-1-yl)-L-glutamine + NADPH + H(+). The enzyme catalyses [amino-group carrier protein]-C-terminal-gamma-(L-glutamyl-5-semialdehyde)-L-glutamate + phosphate + NADP(+) = [amino-group carrier protein]-C-terminal-gamma-(5-phospho-L-glutamyl)-L-glutamate + NADPH + H(+). It functions in the pathway amino-acid biosynthesis; L-lysine biosynthesis via AAA pathway; L-lysine from L-alpha-aminoadipate (Thermus route): step 3/5. Its pathway is amino-acid biosynthesis; L-arginine biosynthesis. Its function is as follows. Involved in both the arginine and lysine biosynthetic pathways. The polypeptide is Putative [LysW]-L-2-aminoadipate/[LysW]-L-glutamate phosphate reductase (Pyrococcus horikoshii (strain ATCC 700860 / DSM 12428 / JCM 9974 / NBRC 100139 / OT-3)).